Consider the following 933-residue polypeptide: Clumping factor A (933 aa).

The signal sequence occupies residues 1–39; that stretch reads MNMKKKEKHAIRKKSIGVASVLVGTLIGFGLLSSKEADA. A YSIRK-G/S signaling motif motif is present at residues 9–20; it reads HAIRKKSIGVAS. Disordered stretches follow at residues 34–200 and 529–904; these read SKEA…SNKD and FNNG…SEDE. Residues 40–542 form a ligand binding A region region; that stretch reads SENSVTQSDS…SGSGDGIDKP (503 aa). Residues 47–65 are compositionally biased toward low complexity; the sequence is SDSASNESKSNDSSSVSAA. Polar residues predominate over residues 71 to 105; sequence TNVSDTKTSSNTNNGETSVAQNPAQQETTQSSSTN. 2 stretches are compositionally biased toward low complexity: residues 106–132 and 143–162; these read ATTE…ATTQ and NQTS…SVNS. The segment covering 163 to 200 has biased composition (polar residues); it reads PQNSTNAENVSTTQDTSTEATPSNNESAPQSTDASNKD. The segment covering 547–565 has biased composition (acidic residues); that stretch reads QPDEPGEIEPIPEDSDSDP. Low complexity predominate over residues 566-598; that stretch reads GSDSGSDSNSDSGSDSGSDSTSDSGSDSASDSD. Over residues 599 to 861 the composition is skewed to acidic residues; sequence SASDSDSASD…DSDSESDSNS (263 aa). Low complexity predominate over residues 862 to 880; that stretch reads DSESGSNNNVVPPNSPKNG. Residues 887–896 are compositionally biased toward basic and acidic residues; sequence NEAKDSKEPL. The short motif at 896 to 900 is the LPXTG sorting signal element; that stretch reads LPDTG. Thr899 is subject to Pentaglycyl murein peptidoglycan amidated threonine. Residues 900–933 constitute a propeptide, removed by sortase; sequence GSEDEANTSLIWGLLASIGSLLLFRRKKENKDKK.

The protein belongs to the serine-aspartate repeat-containing protein (SDr) family.

Its subcellular location is the secreted. It is found in the cell wall. Functionally, cell surface-associated protein implicated in virulence. Promotes bacterial attachment exclusively to the gamma-chain of human fibrinogen. Induces formation of bacterial clumps. The polypeptide is Clumping factor A (clfA) (Staphylococcus aureus (strain COL)).